A 932-amino-acid chain; its full sequence is Transcriptional regulatory protein DagR (932 aa).

Positions 111–343 constitute a Sigma-54 factor interaction domain; sequence LIGYDRSLRD…LKSDIQFLCA (233 aa). ATP is bound by residues 141 to 148 and 210 to 219; these read GPSGVGKT and ADGGYLLLDE. One can recognise a PRD 1 domain in the interval 462-567; the sequence is RYGDQIEERV…KECRHYRQRI (106 aa). His-497 is modified (phosphohistidine). The region spanning 572 to 708 is the PTS EIIA type-4 domain; sequence DCGVILIAHG…PQQENGGKVL (137 aa). His-580 functions as the Tele-phosphohistidine intermediate in the catalytic mechanism. The PRD 2 domain maps to 835-932; the sequence is LNPQRILKEM…YFYIYELLYS (98 aa). His-870 carries the phosphohistidine modification.

Involved in the regulation of the catabolism of D-glucosaminate. The protein is Transcriptional regulatory protein DagR (dgaR) of Salmonella typhimurium (strain 14028s / SGSC 2262).